Consider the following 1057-residue polypeptide: Carbamoyl phosphate synthase large chain (1057 aa).

Residues 1-401 (MPKNKDINTI…SLLKAIRSLE (401 aa)) form a carboxyphosphate synthetic domain region. R129, R169, G175, G176, K208, I210, E215, G241, I242, H243, Q284, and E298 together coordinate ATP. Residues 133–327 (RSLMNELDVP…IAKLAAKIAV (195 aa)) form the ATP-grasp 1 domain. Residues Q284, E298, and N300 each contribute to the Mg(2+) site. 3 residues coordinate Mn(2+): Q284, E298, and N300. An oligomerization domain region spans residues 402–546 (YGVHHLGLPN…YGTYERDNES (145 aa)). The interval 547–929 (VVTDKEKVIV…ALFKGLTASG (383 aa)) is carbamoyl phosphate synthetic domain. The ATP-grasp 2 domain occupies 671–861 (EALLNKIDVP…MAQLAMRAIL (191 aa)). ATP-binding residues include R707, R746, L748, E752, G777, V778, H779, S780, Q820, and E832. Q820, E832, and N834 together coordinate Mg(2+). The Mn(2+) site is built by Q820, E832, and N834. One can recognise an MGS-like domain in the interval 930-1057 (VEVKDHGTVL…ESMSFTMKQM (128 aa)). Residues 930 to 1057 (VEVKDHGTVL…ESMSFTMKQM (128 aa)) form an allosteric domain region.

This sequence belongs to the CarB family. As to quaternary structure, composed of two chains; the small (or glutamine) chain promotes the hydrolysis of glutamine to ammonia, which is used by the large (or ammonia) chain to synthesize carbamoyl phosphate. Tetramer of heterodimers (alpha,beta)4. The cofactor is Mg(2+). Requires Mn(2+) as cofactor.

It catalyses the reaction hydrogencarbonate + L-glutamine + 2 ATP + H2O = carbamoyl phosphate + L-glutamate + 2 ADP + phosphate + 2 H(+). It carries out the reaction hydrogencarbonate + NH4(+) + 2 ATP = carbamoyl phosphate + 2 ADP + phosphate + 2 H(+). Its pathway is amino-acid biosynthesis; L-arginine biosynthesis; carbamoyl phosphate from bicarbonate: step 1/1. It functions in the pathway pyrimidine metabolism; UMP biosynthesis via de novo pathway; (S)-dihydroorotate from bicarbonate: step 1/3. Large subunit of the glutamine-dependent carbamoyl phosphate synthetase (CPSase). CPSase catalyzes the formation of carbamoyl phosphate from the ammonia moiety of glutamine, carbonate, and phosphate donated by ATP, constituting the first step of 2 biosynthetic pathways, one leading to arginine and/or urea and the other to pyrimidine nucleotides. The large subunit (synthetase) binds the substrates ammonia (free or transferred from glutamine from the small subunit), hydrogencarbonate and ATP and carries out an ATP-coupled ligase reaction, activating hydrogencarbonate by forming carboxy phosphate which reacts with ammonia to form carbamoyl phosphate. The sequence is that of Carbamoyl phosphate synthase large chain from Staphylococcus carnosus (strain TM300).